The primary structure comprises 433 residues: Sulfhydrylase FUB7 (433 aa).

Lysine 211 bears the N6-(pyridoxal phosphate)lysine mark.

It belongs to the trans-sulfuration enzymes family. Pyridoxal 5'-phosphate serves as cofactor.

Its pathway is mycotoxin biosynthesis. Its function is as follows. Sulfhydrylase; part of the gene cluster that mediates the biosynthesis of fusaric acid, a mycotoxin with low to moderate toxicity to animals and humans, but with high phytotoxic properties. L-aspartate is suggested as fusaric acid amino acid precursor that is activated and further processed to O-acetyl-L-homoserine by cluster enzymes aspartate kinase FUB3 and homoserine O-acetyltransferase FUB5, as well as enzymes of the primary metabolism. The polyketide synthase (PKS) FUB1 generates the triketide trans-2-hexenal which is presumptively released by the hydrolase FUB4 and linked to the NRPS-bound amino acid precursor by NAD(P)-dependent dehydrogenase FUB6. FUB1, FUB4, and the non-canonical NRPS Fub8 may form an enzyme complex. Further processing of the NRPS-bound intermediate might be carried out by FUB6 and the O-acetylhomoserine FUB7, enabling a spontaneous electrocyclization to close the carbon backbone of fusaric acid. Dihydrofusaric acid is likely to be released via reduction by the thioester reductase (TR) domain of FUB8 whereupon the final oxidation to fusaric acid may (also) be performed by the FMN-dependent dehydrogenase FUB9. The polypeptide is Sulfhydrylase FUB7 (Gibberella moniliformis (strain M3125 / FGSC 7600) (Maize ear and stalk rot fungus)).